We begin with the raw amino-acid sequence, 317 residues long: Dehydrogenase/reductase SDR family member 12 (317 aa).

Residues Ser50 and Ile52 each contribute to the NAD(+) site. Ser175 serves as a coordination point for substrate. NAD(+) is bound by residues Tyr201, Lys205, and Thr234. Catalysis depends on Tyr201, which acts as the Proton acceptor.

Belongs to the short-chain dehydrogenases/reductases (SDR) family.

Its function is as follows. Putative oxidoreductase. The protein is Dehydrogenase/reductase SDR family member 12 of Homo sapiens (Human).